A 178-amino-acid chain; its full sequence is Histone deacetylase complex subunit SAP30L (178 aa).

2 cysteine pairs are disulfide-bonded: Cys-24-Cys-25 and Cys-33-Cys-69. The Atypical zinc finger occupies 24-72; the sequence is CCLIEDAERCGRPAGNASFSKRIQKSISQRKLKLDIDKSVRHLYICDFH. Positions 80 to 99 are disordered; the sequence is RNKRKRKTSDDGGESPDHEV. The Nuclear localization signal (NLS) motif lies at 81-86; the sequence is NKRKRK. An important for DNA and phosphoinositide binding region spans residues 83–85; that stretch reads RKR.

It belongs to the SAP30 family. As to quaternary structure, interacts with components of the histone deacetylase complex sin3a, hdac1 and hdac2. Binds histones and nucleosomes. Detected in embryos at 2dpf (at protein level). Widely expressed during embryogenesis and in adults.

The protein resides in the nucleus. It localises to the nucleolus. Functions as a transcription repressor, probably via its interaction with histone deacetylase complexes. Required for normal expression of numerous target genes. Involved in the functional recruitment of the class 1 Sin3-histone deacetylase complex (HDAC) to the nucleolus. Binds DNA, apparently without sequence-specificity, and bends bound double-stranded DNA. Binds phosphoinositol phosphates (phosphoinositol 3-phosphate, phosphoinositol 4-phosphate and phosphoinositol 5-phosphate) via the same basic sequence motif that mediates DNA binding and nuclear import. This chain is Histone deacetylase complex subunit SAP30L (sap30l), found in Danio rerio (Zebrafish).